Consider the following 191-residue polypeptide: Small ribosomal subunit protein uS5 (191 aa).

Residues 1-20 (MAGERERGGRERSRDREERD) are disordered. One can recognise an S5 DRBM domain in the interval 23-86 (FVDKLVHINR…ESAKRNLTRV (64 aa)).

It belongs to the universal ribosomal protein uS5 family. Part of the 30S ribosomal subunit. Contacts proteins S4 and S8.

With S4 and S12 plays an important role in translational accuracy. In terms of biological role, located at the back of the 30S subunit body where it stabilizes the conformation of the head with respect to the body. The sequence is that of Small ribosomal subunit protein uS5 from Nitrobacter winogradskyi (strain ATCC 25391 / DSM 10237 / CIP 104748 / NCIMB 11846 / Nb-255).